Reading from the N-terminus, the 81-residue chain is Photosystem I iron-sulfur center (81 aa).

4Fe-4S ferredoxin-type domains are found at residues 2 to 31 (SHSVKIYDTCIGCTQCVRACPTDVLEMIPW) and 39 to 68 (IASAPRTEDCVGCKRCESACPTDFLSVRVY). 8 residues coordinate [4Fe-4S] cluster: Cys11, Cys14, Cys17, Cys21, Cys48, Cys51, Cys54, and Cys58.

As to quaternary structure, the eukaryotic PSI reaction center is composed of at least 11 subunits. The cofactor is [4Fe-4S] cluster.

The protein localises to the plastid. It localises to the chloroplast thylakoid membrane. It carries out the reaction reduced [plastocyanin] + hnu + oxidized [2Fe-2S]-[ferredoxin] = oxidized [plastocyanin] + reduced [2Fe-2S]-[ferredoxin]. Apoprotein for the two 4Fe-4S centers FA and FB of photosystem I (PSI); essential for photochemical activity. FB is the terminal electron acceptor of PSI, donating electrons to ferredoxin. The C-terminus interacts with PsaA/B/D and helps assemble the protein into the PSI complex. Required for binding of PsaD and PsaE to PSI. PSI is a plastocyanin-ferredoxin oxidoreductase, converting photonic excitation into a charge separation, which transfers an electron from the donor P700 chlorophyll pair to the spectroscopically characterized acceptors A0, A1, FX, FA and FB in turn. This is Photosystem I iron-sulfur center from Helianthus annuus (Common sunflower).